Consider the following 106-residue polypeptide: MRLLTLIFVALIALLQYPLWLGKGSWLRVWDLNQKIVAQKAVNAELKLRNDTLDAEVRDLKQGNAAIEERARSELGMIKQDEVFYQVIDQMPGQPASPPAALTGAQ.

Residues 1–3 lie on the Cytoplasmic side of the membrane; sequence MRL. A helical transmembrane segment spans residues 4-21; it reads LTLIFVALIALLQYPLWL. Over 22–106 the chain is Periplasmic; that stretch reads GKGSWLRVWD…SPPAALTGAQ (85 aa). Residues 31 to 73 adopt a coiled-coil conformation; the sequence is DLNQKIVAQKAVNAELKLRNDTLDAEVRDLKQGNAAIEERARS.

The protein belongs to the FtsB family. In terms of assembly, part of a complex composed of FtsB, FtsL and FtsQ.

The protein resides in the cell inner membrane. Essential cell division protein. May link together the upstream cell division proteins, which are predominantly cytoplasmic, with the downstream cell division proteins, which are predominantly periplasmic. The polypeptide is Cell division protein FtsB (Methylobacillus flagellatus (strain ATCC 51484 / DSM 6875 / VKM B-1610 / KT)).